We begin with the raw amino-acid sequence, 162 residues long: uncharacterized protein (162 aa).

Positions 6-99 constitute an HTH asnC-type domain; the sequence is LDDLDRAILK…YVTKTLSGFP (94 aa). Residues 25–44 constitute a DNA-binding region (H-T-H motif); it reads IAEISNQLKKPESTVHFRIK.

This is an uncharacterized protein from Pyrococcus horikoshii (strain ATCC 700860 / DSM 12428 / JCM 9974 / NBRC 100139 / OT-3).